A 141-amino-acid polypeptide reads, in one-letter code: Putative antiporter subunit mnhB2 (141 aa).

The next 4 membrane-spanning stretches (helical) occupy residues 10–30, 35–55, 70–90, and 116–136; these read TVTK…FFAG, GGGF…FLAF, KLMI…VFFG, and LFEL…MLAL.

Belongs to the CPA3 antiporters (TC 2.A.63) subunit B family. May form a heterooligomeric complex that consists of seven subunits: mnhA2, mnhB2, mnhC2, mnhD2, mnhE2, mnhF2 and mnhG2.

It localises to the cell membrane. The chain is Putative antiporter subunit mnhB2 (mnhB2) from Staphylococcus haemolyticus (strain JCSC1435).